A 496-amino-acid chain; its full sequence is Beta-N-acetylhexosaminidase (496 aa).

The Proton donor role is filled by Glu-298.

This sequence belongs to the glycosyl hydrolase 20 family.

The enzyme catalyses Hydrolysis of terminal non-reducing N-acetyl-D-hexosamine residues in N-acetyl-beta-D-hexosaminides.. It participates in glycan degradation; chitin degradation. In terms of biological role, catalyzes the cleavage of beta-N-acetylglucosaminides and beta-N-acetylgalactosaminides. Also catalyzes the hydrolysis of N-acetylchitooligomers. May be involved in chitin degradation. It is not able to cleave beta-glucosides. In Cellulomonas fimi, this protein is Beta-N-acetylhexosaminidase (hex20).